The following is an 85-amino-acid chain: Photosystem I reaction center subunit PsaK (85 aa).

2 consecutive transmembrane segments (helical) span residues 12–34 (TVTW…IAVG) and 54–76 (GGMG…IGAI).

It belongs to the PsaG/PsaK family.

It is found in the cellular thylakoid membrane. The chain is Photosystem I reaction center subunit PsaK from Parasynechococcus marenigrum (strain WH8102).